The chain runs to 245 residues: Protein crossbronx (245 aa).

In terms of domain architecture, UBC core spans 20–177; sequence QQEYKILAEY…VQESIVESKS (158 aa).

It belongs to the ubiquitin-conjugating enzyme family. FTS subfamily.

The polypeptide is Protein crossbronx (cbx) (Drosophila virilis (Fruit fly)).